Consider the following 234-residue polypeptide: 2,3-bisphosphoglycerate-dependent phosphoglycerate mutase (234 aa).

Substrate is bound by residues 8–15, 21–22, Arg-60, 87–90, Lys-98, 114–115, and 183–184; these read RHGESVWN, TG, ERHY, RR, and GN. Residue His-9 is the Tele-phosphohistidine intermediate of the active site. Residue Glu-87 is the Proton donor/acceptor of the active site.

The protein belongs to the phosphoglycerate mutase family. BPG-dependent PGAM subfamily. As to quaternary structure, homodimer.

The enzyme catalyses (2R)-2-phosphoglycerate = (2R)-3-phosphoglycerate. It functions in the pathway carbohydrate degradation; glycolysis; pyruvate from D-glyceraldehyde 3-phosphate: step 3/5. Functionally, catalyzes the interconversion of 2-phosphoglycerate and 3-phosphoglycerate. The sequence is that of 2,3-bisphosphoglycerate-dependent phosphoglycerate mutase from Geobacter sp. (strain M21).